The primary structure comprises 232 residues: Large ribosomal subunit protein uL1 (232 aa).

This sequence belongs to the universal ribosomal protein uL1 family. Part of the 50S ribosomal subunit.

Functionally, binds directly to 23S rRNA. The L1 stalk is quite mobile in the ribosome, and is involved in E site tRNA release. Protein L1 is also a translational repressor protein, it controls the translation of the L11 operon by binding to its mRNA. The polypeptide is Large ribosomal subunit protein uL1 (Chelativorans sp. (strain BNC1)).